Reading from the N-terminus, the 358-residue chain is Peptide chain release factor 2 (358 aa).

Q242 carries the post-translational modification N5-methylglutamine.

This sequence belongs to the prokaryotic/mitochondrial release factor family. In terms of processing, methylated by PrmC. Methylation increases the termination efficiency of RF2.

Its subcellular location is the cytoplasm. Peptide chain release factor 2 directs the termination of translation in response to the peptide chain termination codons UGA and UAA. This is Peptide chain release factor 2 (prfB) from Borreliella burgdorferi (strain ATCC 35210 / DSM 4680 / CIP 102532 / B31) (Borrelia burgdorferi).